Reading from the N-terminus, the 490-residue chain is Glutamate--tRNA ligase (490 aa).

The 'HIGH' region motif lies at 13 to 23; it reads PSPTGTPHVGL. The short motif at 257-261 is the 'KMSKS' region element; the sequence is KLSKR. Residue K260 coordinates ATP.

It belongs to the class-I aminoacyl-tRNA synthetase family. Glutamate--tRNA ligase type 1 subfamily. As to quaternary structure, monomer.

The protein localises to the cytoplasm. The enzyme catalyses tRNA(Glu) + L-glutamate + ATP = L-glutamyl-tRNA(Glu) + AMP + diphosphate. Functionally, catalyzes the attachment of glutamate to tRNA(Glu) in a two-step reaction: glutamate is first activated by ATP to form Glu-AMP and then transferred to the acceptor end of tRNA(Glu). The chain is Glutamate--tRNA ligase from Mycobacterium tuberculosis (strain ATCC 25177 / H37Ra).